The chain runs to 285 residues: Sulfotransferase 2A1 (285 aa).

3'-phosphoadenylyl sulfate contacts are provided by Lys44, Ser45, Gly46, Thr47, Asn48, and Trp49. His99 functions as the Proton acceptor in the catalytic mechanism. Positions 121, 129, 184, 218, 223, 247, 248, and 249 each coordinate 3'-phosphoadenylyl sulfate. A Phosphoserine modification is found at Ser251.

It belongs to the sulfotransferase 1 family. Homodimer. As to expression, predominanly expressed in liver. Detected also in adrenal gland and in jejunum.

The protein resides in the cytoplasm. It localises to the cytosol. It catalyses the reaction an alcohol + 3'-phosphoadenylyl sulfate = an alkyl sulfate + adenosine 3',5'-bisphosphate + H(+). It carries out the reaction 3beta-hydroxyandrost-5-en-17-one + 3'-phosphoadenylyl sulfate = dehydroepiandrosterone 3-sulfate + adenosine 3',5'-bisphosphate + H(+). The enzyme catalyses taurolithocholate + 3'-phosphoadenylyl sulfate = taurolithocholate 3-sulfate + adenosine 3',5'-bisphosphate + H(+). The catalysed reaction is lithocholate + 3'-phosphoadenylyl sulfate = lithocholate sulfate + adenosine 3',5'-bisphosphate + H(+). It catalyses the reaction (24S)-hydroxycholesterol + 3'-phosphoadenylyl sulfate = (24S)-hydroxycholesterol 24-sulfate + adenosine 3',5'-bisphosphate + H(+). It carries out the reaction (24S)-hydroxycholesterol + 3'-phosphoadenylyl sulfate = (24S)-hydroxycholesterol 3-sulfate + adenosine 3',5'-bisphosphate + H(+). The enzyme catalyses (24S)-hydroxycholesterol 24-sulfate + 3'-phosphoadenylyl sulfate = (24S)-hydroxycholesterol 3,24-disulfate + adenosine 3',5'-bisphosphate + H(+). The catalysed reaction is pregnenolone + 3'-phosphoadenylyl sulfate = pregnenolone sulfate + adenosine 3',5'-bisphosphate + H(+). It catalyses the reaction androsterone + 3'-phosphoadenylyl sulfate = androsterone 3alpha-sulfate + adenosine 3',5'-bisphosphate + H(+). Sulfotransferase that utilizes 3'-phospho-5'-adenylyl sulfate (PAPS) as sulfonate donor to catalyze the sulfonation of steroids and bile acids in the liver and adrenal glands. Mediates the sulfation of a wide range of steroids and sterols, including pregnenolone, androsterone, DHEA, bile acids, cholesterol and as well many xenobiotics that contain alcohol and phenol functional groups. Sulfonation increases the water solubility of most compounds, and therefore their renal excretion, but it can also result in bioactivation to form active metabolites. Plays an important role in maintening steroid and lipid homeostasis. Plays a key role in bile acid metabolism. In addition, catalyzes the metabolic activation of potent carcinogenic polycyclic arylmethanols. This chain is Sulfotransferase 2A1 (SULT2A1), found in Macaca fascicularis (Crab-eating macaque).